Reading from the N-terminus, the 192-residue chain is Ribosome maturation factor RimM (192 aa).

A PRC barrel domain is found at 116-192; that stretch reads PGEYYWVDLI…RIIVDWQPDY (77 aa).

Belongs to the RimM family. As to quaternary structure, binds ribosomal protein uS19.

It localises to the cytoplasm. In terms of biological role, an accessory protein needed during the final step in the assembly of 30S ribosomal subunit, possibly for assembly of the head region. Essential for efficient processing of 16S rRNA. May be needed both before and after RbfA during the maturation of 16S rRNA. It has affinity for free ribosomal 30S subunits but not for 70S ribosomes. The protein is Ribosome maturation factor RimM of Verminephrobacter eiseniae (strain EF01-2).